A 246-amino-acid polypeptide reads, in one-letter code: MGRGRVELKRIENKINRQVTFAKRRNGLLKKAYELSVLCDAEVALIIFSNRGKLYEFCSTSSMVKTIEKYQRCSYATLEANQSVTDTQNNYHEYLRLKARVELLQRSQRNFLGEDLGTLSSKDLEQLENQLESSLKQIRSRKTQFMLDQLADLQQKEQMLAESNRLLRRKLEESVAGFPLRLCWEDGGDHQLMHQQNRLPNTEGFFQPLGLHSSSPHFGYNPVNTDEVNAAATAHNMNGFIHGWML.

Residues 1–61 (MGRGRVELKR…GKLYEFCSTS (61 aa)) enclose the MADS-box domain. Residues 87–177 (TQNNYHEYLR…RRKLEESVAG (91 aa)) form the K-box domain.

Its subcellular location is the nucleus. MADS-box transcription factor that acts redundantly with J2 to control meristem maturation and inflorescence architecture. This is MADS-box protein EJ2 from Solanum lycopersicum (Tomato).